Consider the following 145-residue polypeptide: Putative pre-16S rRNA nuclease (145 aa).

Belongs to the YqgF nuclease family.

It localises to the cytoplasm. In terms of biological role, could be a nuclease involved in processing of the 5'-end of pre-16S rRNA. This Microcystis aeruginosa (strain NIES-843 / IAM M-2473) protein is Putative pre-16S rRNA nuclease.